A 4717-amino-acid polypeptide reads, in one-letter code: Midasin (4717 aa).

6 AAA-ATPase protomer regions span residues 149-384 (LVQK…FGAF), 458-797 (EQLA…GLRR), 871-1131 (EHYI…QEVI), 1157-1448 (SLKE…NACE), 1552-1811 (VLRA…EVFD), and 1858-2106 (VLES…FLLK). ATP contacts are provided by residues 159-166 (GPEGIGKK) and 474-481 (GETGTGKT). Ser593 is modified (phosphoserine). Residues 901–908 (GPTSSGKT), 1193–1200 (GDTGCGKT), 1566–1573 (GSPGVGKT), and 1876–1883 (GDTATGKT) each bind ATP. The tract at residues 2173–3925 (KLLRKVLLTN…SGVGAEDITN (1753 aa)) is linker. Disordered regions lie at residues 3898–3924 (PQEG…EDIT), 3936–4283 (LANE…LGDH), and 4295–4365 (EWED…EVGD). 2 stretches are compositionally biased toward acidic residues: residues 3936-3950 (LANE…DLDE) and 3973-3993 (ENSD…DIPE). Residues 4020–4030 (NEQSAANNESD) show a composition bias toward polar residues. Residues 4031 to 4049 (LVSKEDDNKALEDKDRQEK) show a composition bias toward basic and acidic residues. Acidic residues predominate over residues 4050–4066 (EDEEEMSDDVGIDDEIQ). The span at 4080-4103 (NEDHLDLPEDLKLDEKEGDVSKDS) shows a compositional bias: basic and acidic residues. Acidic residues-rich tracts occupy residues 4104–4177 (DLED…ESTE), 4184–4196 (EELE…EDQA), and 4226–4236 (ENEELGEEDGA). Composition is skewed to basic and acidic residues over residues 4258 to 4275 (QKGE…EADR) and 4329 to 4342 (AEKD…RDES). Residues 4343 to 4355 (ANQNPDSMNSTNI) are compositionally biased toward polar residues. In terms of domain architecture, VWFA spans 4505 to 4707 (QVMISIDDSK…ELPQLLSSAL (203 aa)).

This sequence belongs to the midasin family. As to quaternary structure, associates with pre-60S ribosomes in the nucleoplasm.

Its subcellular location is the nucleus. The protein localises to the nucleolus. The protein resides in the nucleoplasm. Functionally, nuclear chaperone required for maturation and nuclear export of pre-60S ribosome subunits. Functions at successive maturation steps to remove ribosomal factors at critical transition points, first driving the exit of early pre-60S particles from the nucleolus and then driving late pre-60S particles from the nucleus. In Schizosaccharomyces pombe (strain 972 / ATCC 24843) (Fission yeast), this protein is Midasin (mdn1).